A 261-amino-acid polypeptide reads, in one-letter code: Cytochrome c oxidase subunit 3 (261 aa).

At 1 to 15 (MTHQTHAYHMVNPSP) the chain is on the mitochondrial matrix side. Residues 16 to 34 (WPLTGALSALLMTSGLIMW) traverse the membrane as a helical segment. The Mitochondrial intermembrane portion of the chain corresponds to 35 to 40 (FHFNST). The helical transmembrane segment at 41-66 (ALLMLGLTTNMLTMYQWWRDIIREST) threads the bilayer. The Mitochondrial matrix segment spans residues 67 to 72 (FQGHHT). The helical transmembrane segment at 73-105 (PVVQKGLRYGMILFIISEVLFFTGFFWAFYHSS) threads the bilayer. At 106–128 (LAPTPELGGCWPPTGINPLNPLE) the chain is on the mitochondrial intermembrane side. Residues 129-152 (VPLLNTSVLLASGVSITWAHHSLM) form a helical membrane-spanning segment. The Mitochondrial matrix segment spans residues 153–155 (EGN). The helical transmembrane segment at 156–183 (RSHMLQALFITITLGVYFTLLQASEYYE) threads the bilayer. Residues 184–190 (APFTISD) lie on the Mitochondrial intermembrane side of the membrane. A helical membrane pass occupies residues 191-223 (GVYGSTFFVATGFHGLHVIIGSTFLIVCFFRQL). The Mitochondrial matrix segment spans residues 224–232 (KFHFTSNHH). A helical membrane pass occupies residues 233–256 (FGFEAAAWYWHFVDVVWLFLYVSI). Topologically, residues 257-261 (YWWGS) are mitochondrial intermembrane.

It belongs to the cytochrome c oxidase subunit 3 family. In terms of assembly, component of the cytochrome c oxidase (complex IV, CIV), a multisubunit enzyme composed of 14 subunits. The complex is composed of a catalytic core of 3 subunits MT-CO1, MT-CO2 and MT-CO3, encoded in the mitochondrial DNA, and 11 supernumerary subunits COX4I, COX5A, COX5B, COX6A, COX6B, COX6C, COX7A, COX7B, COX7C, COX8 and NDUFA4, which are encoded in the nuclear genome. The complex exists as a monomer or a dimer and forms supercomplexes (SCs) in the inner mitochondrial membrane with NADH-ubiquinone oxidoreductase (complex I, CI) and ubiquinol-cytochrome c oxidoreductase (cytochrome b-c1 complex, complex III, CIII), resulting in different assemblies (supercomplex SCI(1)III(2)IV(1) and megacomplex MCI(2)III(2)IV(2)).

The protein resides in the mitochondrion inner membrane. It catalyses the reaction 4 Fe(II)-[cytochrome c] + O2 + 8 H(+)(in) = 4 Fe(III)-[cytochrome c] + 2 H2O + 4 H(+)(out). Component of the cytochrome c oxidase, the last enzyme in the mitochondrial electron transport chain which drives oxidative phosphorylation. The respiratory chain contains 3 multisubunit complexes succinate dehydrogenase (complex II, CII), ubiquinol-cytochrome c oxidoreductase (cytochrome b-c1 complex, complex III, CIII) and cytochrome c oxidase (complex IV, CIV), that cooperate to transfer electrons derived from NADH and succinate to molecular oxygen, creating an electrochemical gradient over the inner membrane that drives transmembrane transport and the ATP synthase. Cytochrome c oxidase is the component of the respiratory chain that catalyzes the reduction of oxygen to water. Electrons originating from reduced cytochrome c in the intermembrane space (IMS) are transferred via the dinuclear copper A center (CU(A)) of subunit 2 and heme A of subunit 1 to the active site in subunit 1, a binuclear center (BNC) formed by heme A3 and copper B (CU(B)). The BNC reduces molecular oxygen to 2 water molecules using 4 electrons from cytochrome c in the IMS and 4 protons from the mitochondrial matrix. The chain is Cytochrome c oxidase subunit 3 (MT-CO3) from Syncerus caffer (African buffalo).